A 128-amino-acid polypeptide reads, in one-letter code: Fluoride-specific ion channel FluC (128 aa).

4 helical membrane passes run 5–25, 34–54, 67–87, and 99–119; these read LFIS…GLLF, FGAL…LGLF, FLIT…SEVV, and FCVL…GIWI. The Na(+) site is built by Gly-74 and Thr-77.

The protein belongs to the fluoride channel Fluc/FEX (TC 1.A.43) family.

The protein localises to the cell inner membrane. It catalyses the reaction fluoride(in) = fluoride(out). With respect to regulation, na(+) is not transported, but it plays an essential structural role and its presence is essential for fluoride channel function. Fluoride-specific ion channel. Important for reducing fluoride concentration in the cell, thus reducing its toxicity. This chain is Fluoride-specific ion channel FluC, found in Haemophilus influenzae (strain PittEE).